The chain runs to 393 residues: tRNA(Met) cytidine acetate ligase (393 aa).

Residues Gly-81, Asn-142, and Arg-167 each contribute to the ATP site.

The protein belongs to the TmcAL family.

The protein resides in the cytoplasm. The catalysed reaction is cytidine(34) in elongator tRNA(Met) + acetate + ATP = N(4)-acetylcytidine(34) in elongator tRNA(Met) + AMP + diphosphate. Functionally, catalyzes the formation of N(4)-acetylcytidine (ac(4)C) at the wobble position of elongator tRNA(Met), using acetate and ATP as substrates. First activates an acetate ion to form acetyladenylate (Ac-AMP) and then transfers the acetyl group to tRNA to form ac(4)C34. In Bacillus cereus (strain Q1), this protein is tRNA(Met) cytidine acetate ligase.